The sequence spans 410 residues: Benzene 1,2-dioxygenase system ferredoxin--NAD(+) reductase subunit (410 aa).

Residue 4–35 (HVAIIGNGVAGFTTAQALRAEGYEGRISLIGE) participates in FAD binding. Residue 145 to 173 (RLLIVGGGLIGCEVATTARKLGLSVTILE) participates in NAD(+) binding.

The protein belongs to the bacterial ring-hydroxylating dioxygenase ferredoxin reductase family. In terms of assembly, this dioxygenase system consists of four proteins: the two subunits of the hydroxylase component (BedC1 and BedC2), a ferredoxin (BedB) and a ferredoxin reductase (BedA). It depends on FAD as a cofactor.

The enzyme catalyses 2 reduced [2Fe-2S]-[ferredoxin] + NAD(+) + H(+) = 2 oxidized [2Fe-2S]-[ferredoxin] + NADH. Its pathway is aromatic compound metabolism; benzene degradation; catechol from benzene: step 1/2. In terms of biological role, part of the electron transfer component of benzene 1,2-dioxygenase, transfers electrons from ferredoxin to NADH. The sequence is that of Benzene 1,2-dioxygenase system ferredoxin--NAD(+) reductase subunit (bedA) from Pseudomonas putida (Arthrobacter siderocapsulatus).